The primary structure comprises 169 residues: Shikimate kinase (169 aa).

12-17 (AVGKTT) serves as a coordination point for ATP. Thr16 serves as a coordination point for Mg(2+). Substrate is bound by residues Asp34, Arg58, and Gly80. Arg119 serves as a coordination point for ATP. Residue Arg139 participates in substrate binding. Residue Arg156 coordinates ATP.

It belongs to the shikimate kinase family. As to quaternary structure, monomer. The cofactor is Mg(2+).

The protein resides in the cytoplasm. It carries out the reaction shikimate + ATP = 3-phosphoshikimate + ADP + H(+). It functions in the pathway metabolic intermediate biosynthesis; chorismate biosynthesis; chorismate from D-erythrose 4-phosphate and phosphoenolpyruvate: step 5/7. In terms of biological role, catalyzes the specific phosphorylation of the 3-hydroxyl group of shikimic acid using ATP as a cosubstrate. The sequence is that of Shikimate kinase from Alkaliphilus oremlandii (strain OhILAs) (Clostridium oremlandii (strain OhILAs)).